We begin with the raw amino-acid sequence, 462 residues long: uncharacterized protein (462 aa).

The 59-residue stretch at 12 to 70 (MLKKNDIIQVAISDLSHEGAGVAKHDGFVFFVDNALPEEVIDMRVLKVNKNSGFGKVEA) folds into the TRAM domain. The S-adenosyl-L-methionine site is built by glutamine 294, tyrosine 323, glutamate 344, and aspartate 392. Catalysis depends on cysteine 419, which acts as the Nucleophile.

The protein belongs to the class I-like SAM-binding methyltransferase superfamily. RNA M5U methyltransferase family.

This is an uncharacterized protein from Streptococcus pyogenes serotype M18 (strain MGAS8232).